The sequence spans 211 residues: Inactive ribonuclease-like protein 10 (211 aa).

A signal peptide spans 1–24 (MKLTLVQIFFMMLLLLLGLGVGLG).

Belongs to the pancreatic ribonuclease family. The N-terminus is blocked. Glycosylated.

Its subcellular location is the secreted. Functionally, secreted proximal epididymal protein required for post-testicular sperm maturation and male fertility. May be involved in sperm adhesion to the egg zona pellucida. Does not have ribonuclease activity. This chain is Inactive ribonuclease-like protein 10 (RNASE10), found in Bos taurus (Bovine).